The following is a 90-amino-acid chain: Probable Fe(2+)-trafficking protein (90 aa).

Belongs to the Fe(2+)-trafficking protein family.

In terms of biological role, could be a mediator in iron transactions between iron acquisition and iron-requiring processes, such as synthesis and/or repair of Fe-S clusters in biosynthetic enzymes. The polypeptide is Probable Fe(2+)-trafficking protein (Nitrosospira multiformis (strain ATCC 25196 / NCIMB 11849 / C 71)).